Here is a 501-residue protein sequence, read N- to C-terminus: Glycerol kinase (501 aa).

ADP is bound at residue threonine 11. Threonine 11, threonine 12, and serine 13 together coordinate ATP. Threonine 11 is a binding site for sn-glycerol 3-phosphate. An ADP-binding site is contributed by arginine 15. Residues arginine 81, glutamate 82, tyrosine 133, and aspartate 242 each contribute to the sn-glycerol 3-phosphate site. Residues arginine 81, glutamate 82, tyrosine 133, aspartate 242, and glutamine 243 each contribute to the glycerol site. Residues threonine 264 and glycine 307 each coordinate ADP. ATP-binding residues include threonine 264, glycine 307, glutamine 311, and glycine 409. ADP contacts are provided by glycine 409 and asparagine 413.

This sequence belongs to the FGGY kinase family.

It carries out the reaction glycerol + ATP = sn-glycerol 3-phosphate + ADP + H(+). It participates in polyol metabolism; glycerol degradation via glycerol kinase pathway; sn-glycerol 3-phosphate from glycerol: step 1/1. With respect to regulation, inhibited by fructose 1,6-bisphosphate (FBP). Its function is as follows. Key enzyme in the regulation of glycerol uptake and metabolism. Catalyzes the phosphorylation of glycerol to yield sn-glycerol 3-phosphate. The sequence is that of Glycerol kinase from Borrelia garinii subsp. bavariensis (strain ATCC BAA-2496 / DSM 23469 / PBi) (Borreliella bavariensis).